The chain runs to 819 residues: Leucine--tRNA ligase (819 aa).

The 'HIGH' region signature appears at 40–51 (PYPSGAGLHVGH). A 'KMSKS' region motif is present at residues 600–604 (KMSKS). K603 is an ATP binding site.

This sequence belongs to the class-I aminoacyl-tRNA synthetase family.

It is found in the cytoplasm. The catalysed reaction is tRNA(Leu) + L-leucine + ATP = L-leucyl-tRNA(Leu) + AMP + diphosphate. In Chlamydia trachomatis serovar A (strain ATCC VR-571B / DSM 19440 / HAR-13), this protein is Leucine--tRNA ligase.